The following is a 397-amino-acid chain: Tryptophan synthase beta chain (397 aa).

Residue lysine 87 is modified to N6-(pyridoxal phosphate)lysine.

The protein belongs to the TrpB family. In terms of assembly, tetramer of two alpha and two beta chains. Requires pyridoxal 5'-phosphate as cofactor.

It catalyses the reaction (1S,2R)-1-C-(indol-3-yl)glycerol 3-phosphate + L-serine = D-glyceraldehyde 3-phosphate + L-tryptophan + H2O. It functions in the pathway amino-acid biosynthesis; L-tryptophan biosynthesis; L-tryptophan from chorismate: step 5/5. Its function is as follows. The beta subunit is responsible for the synthesis of L-tryptophan from indole and L-serine. The chain is Tryptophan synthase beta chain from Escherichia coli O17:K52:H18 (strain UMN026 / ExPEC).